Consider the following 316-residue polypeptide: Ribose-phosphate pyrophosphokinase (316 aa).

ATP-binding positions include 42–44 (DGE) and 101–102 (RQ). Histidine 135 and aspartate 174 together coordinate Mg(2+). The active site involves lysine 197. Residues arginine 199, aspartate 223, and 227 to 231 (DTAGT) each bind D-ribose 5-phosphate.

The protein belongs to the ribose-phosphate pyrophosphokinase family. Class I subfamily. As to quaternary structure, homohexamer. It depends on Mg(2+) as a cofactor.

Its subcellular location is the cytoplasm. The catalysed reaction is D-ribose 5-phosphate + ATP = 5-phospho-alpha-D-ribose 1-diphosphate + AMP + H(+). It functions in the pathway metabolic intermediate biosynthesis; 5-phospho-alpha-D-ribose 1-diphosphate biosynthesis; 5-phospho-alpha-D-ribose 1-diphosphate from D-ribose 5-phosphate (route I): step 1/1. Functionally, involved in the biosynthesis of the central metabolite phospho-alpha-D-ribosyl-1-pyrophosphate (PRPP) via the transfer of pyrophosphoryl group from ATP to 1-hydroxyl of ribose-5-phosphate (Rib-5-P). This chain is Ribose-phosphate pyrophosphokinase, found in Halalkalibacterium halodurans (strain ATCC BAA-125 / DSM 18197 / FERM 7344 / JCM 9153 / C-125) (Bacillus halodurans).